Here is a 479-residue protein sequence, read N- to C-terminus: Catalase easC (479 aa).

Positions 1–13 (MASQVSLTAQGSG) are enriched in polar residues. A disordered region spans residues 1–28 (MASQVSLTAQGSGLSAPLNGPEHLTSTT). His53 is an active-site residue. Tyr343 provides a ligand contact to heme. A disordered region spans residues 365 to 385 (HAANDAPKTKKPAVPLQKQSR).

Belongs to the catalase family. Heme is required as a cofactor.

It functions in the pathway alkaloid biosynthesis; ergot alkaloid biosynthesis. Its function is as follows. Catalase; part of the gene cluster that mediates the biosynthesis of fungal ergot alkaloid. DmaW catalyzes the first step of ergot alkaloid biosynthesis by condensing dimethylallyl diphosphate (DMAP) and tryptophan to form 4-dimethylallyl-L-tryptophan. The second step is catalyzed by the methyltransferase easF that methylates 4-dimethylallyl-L-tryptophan in the presence of S-adenosyl-L-methionine, resulting in the formation of 4-dimethylallyl-L-abrine. The catalase easC and the FAD-dependent oxidoreductase easE then transform 4-dimethylallyl-L-abrine to chanoclavine-I which is further oxidized by easD in the presence of NAD(+), resulting in the formation of chanoclavine-I aldehyde. Agroclavine dehydrogenase easG then mediates the conversion of chanoclavine-I aldehyde to agroclavine via a non-enzymatic adduct reaction: the substrate is an iminium intermediate that is formed spontaneously from chanoclavine-I aldehyde in the presence of glutathione. Further conversion of agroclavine to paspalic acid is a two-step process involving oxidation of agroclavine to elymoclavine and of elymoclavine to paspalic acid, the second step being performed by the elymoclavine oxidase cloA. However, cloA does not encode a functional enzyme indicating that C.fusiformis terminates its ergot alkaloid pathway at elymoclavine. This Claviceps fusiformis (Ergot fungus) protein is Catalase easC.